A 126-amino-acid chain; its full sequence is Large ribosomal subunit protein bL12 (126 aa).

This sequence belongs to the bacterial ribosomal protein bL12 family. Homodimer. Part of the ribosomal stalk of the 50S ribosomal subunit. Forms a multimeric L10(L12)X complex, where L10 forms an elongated spine to which 2 to 4 L12 dimers bind in a sequential fashion. Binds GTP-bound translation factors.

In terms of biological role, forms part of the ribosomal stalk which helps the ribosome interact with GTP-bound translation factors. Is thus essential for accurate translation. The sequence is that of Large ribosomal subunit protein bL12 from Nocardia farcinica (strain IFM 10152).